We begin with the raw amino-acid sequence, 210 residues long: Ribosomal RNA large subunit methyltransferase E (210 aa).

S-adenosyl-L-methionine-binding residues include Gly-61, Trp-63, Asp-81, Asp-97, and Asp-122. The active-site Proton acceptor is the Lys-162.

It belongs to the class I-like SAM-binding methyltransferase superfamily. RNA methyltransferase RlmE family.

It localises to the cytoplasm. It catalyses the reaction uridine(2552) in 23S rRNA + S-adenosyl-L-methionine = 2'-O-methyluridine(2552) in 23S rRNA + S-adenosyl-L-homocysteine + H(+). Functionally, specifically methylates the uridine in position 2552 of 23S rRNA at the 2'-O position of the ribose in the fully assembled 50S ribosomal subunit. The chain is Ribosomal RNA large subunit methyltransferase E from Xanthomonas campestris pv. campestris (strain 8004).